A 99-amino-acid polypeptide reads, in one-letter code: Putative septation protein SpoVG (99 aa).

Belongs to the SpoVG family.

Functionally, could be involved in septation. This chain is Putative septation protein SpoVG, found in Myxococcus xanthus (strain DK1622).